The following is a 782-amino-acid chain: Nucleolar RNA helicase 2 (782 aa).

Positions 1–184 (MPGKLRSASK…IPVEQKEGAF (184 aa)) are disordered. Residues Ser-7 and Ser-13 each carry the phosphoserine modification. 2 stretches are compositionally biased toward basic and acidic residues: residues 26 to 42 (PSEKKTRKEKPKSKTDE) and 99 to 117 (EPLEKKAPSAKTKEMKAEE). N6-acetyllysine is present on Lys-39. Lys-114 participates in a covalent cross-link: Glycyl lysine isopeptide (Lys-Gly) (interchain with G-Cter in SUMO1); alternate. Lys-114 participates in a covalent cross-link: Glycyl lysine isopeptide (Lys-Gly) (interchain with G-Cter in SUMO2); alternate. At Ser-119 the chain carries Phosphoserine. Over residues 134–143 (GKEANGDVGE) the composition is skewed to basic and acidic residues. Residue Lys-135 is modified to N6-acetyllysine. A phosphoserine mark is found at Ser-145 and Ser-169. Residues 172–181 (EKEIPVEQKE) show a composition bias toward basic and acidic residues. A Q motif motif is present at residues 182–210 (GAFSNFPISEETVKLLKARGVNFLFPIQA). One can recognise a Helicase ATP-binding domain in the interval 213 to 392 (FHHVYSGKDL…KKYMKSTYEQ (180 aa)). 226 to 233 (ARTGTGKT) is a binding site for ATP. Position 292 is a phosphothreonine (Thr-292). Positions 335 to 338 (DEVD) match the DEAD box motif. The Helicase C-terminal domain maps to 425–569 (DVIRVYSGHQ…GVPSATEIIK (145 aa)). Ser-563 carries the phosphoserine modification. Lys-596 carries the post-translational modification N6-acetyllysine. Residues 704 to 782 (ATEQPELEGP…KRSFSKAFGQ (79 aa)) form a disordered region. A run of 3 repeats spans residues 720-724 (GRGQR), 731-735 (FRGQR), and 741-747 (FRGQGQR). The tract at residues 720–747 (GRGQRDGSRGSFRGQRGGSRNFRGQGQR) is 3 X 5 AA repeats. A compositionally biased stretch (low complexity) spans 728-756 (RGSFRGQRGGSRNFRGQGQRGGSRNFRGQ). Residue Lys-778 is modified to N6-acetyllysine.

It belongs to the DEAD box helicase family. DDX21/DDX50 subfamily. Homodimer; homodimerizes via its N-terminus. Found in a multi-helicase-TICAM1 complex at least composed of DHX36, DDX1, DDX21 and TICAM1; this complex exists in resting cells with or without poly(I:C) RNA ligand stimulation. Interacts (via C-terminus) with TICAM1 (via TIR domain). Interacts with DHX36 (via C-terminus); this interaction serves as bridges to TICAM1. Interacts (via C-terminus) with DDX1 (via B30.2/SPRY domain); this interaction serves as bridges to TICAM1. Component of the B-WICH complex, at least composed of SMARCA5/SNF2H, BAZ1B/WSTF, SF3B1, DEK, MYO1C, ERCC6, MYBBP1A and DDX21. Interacts with C1QBP. Interacts with JUN. Interacts with WDR46. Interacts with MCM3AP. Interacts with WDR43. Interacts with KPNA3. Interacts with GID4. In terms of processing, acetylation by CREBBP/CBP inhibits the helicase activity. Deacetylation by SIRT7 promotes the helicase activity and overcomes R-loop-mediated stalling of RNA polymerases.

The protein localises to the nucleus. It is found in the nucleolus. It localises to the nucleoplasm. The protein resides in the cytoplasm. Its subcellular location is the cytosol. The protein localises to the mitochondrion. It catalyses the reaction ATP + H2O = ADP + phosphate + H(+). Its activity is regulated as follows. Acetylation inhibits the helicase activity. Its function is as follows. RNA helicase that acts as a sensor of the transcriptional status of both RNA polymerase (Pol) I and II: promotes ribosomal RNA (rRNA) processing and transcription from polymerase II (Pol II). Binds various RNAs, such as rRNAs, snoRNAs, 7SK and, at lower extent, mRNAs. In the nucleolus, localizes to rDNA locus, where it directly binds rRNAs and snoRNAs, and promotes rRNA transcription, processing and modification. Required for rRNA 2'-O-methylation, possibly by promoting the recruitment of late-acting snoRNAs SNORD56 and SNORD58 with pre-ribosomal complexes. In the nucleoplasm, binds 7SK RNA and is recruited to the promoters of Pol II-transcribed genes: acts by facilitating the release of P-TEFb from inhibitory 7SK snRNP in a manner that is dependent on its helicase activity, thereby promoting transcription of its target genes. Functions as a cofactor for JUN-activated transcription: required for phosphorylation of JUN at 'Ser-77'. Can unwind double-stranded RNA (helicase) and can fold or introduce a secondary structure to a single-stranded RNA (foldase). Together with SIRT7, required to prevent R-loop-associated DNA damage and transcription-associated genomic instability: deacetylation by SIRT7 activates the helicase activity, thereby overcoming R-loop-mediated stalling of RNA polymerases. Involved in rRNA processing. May bind to specific miRNA hairpins. Component of a multi-helicase-TICAM1 complex that acts as a cytoplasmic sensor of viral double-stranded RNA (dsRNA) and plays a role in the activation of a cascade of antiviral responses including the induction of pro-inflammatory cytokines via the adapter molecule TICAM1. This is Nucleolar RNA helicase 2 (Ddx21) from Rattus norvegicus (Rat).